A 340-amino-acid chain; its full sequence is Heat-inducible transcription repressor HrcA (340 aa).

The protein belongs to the HrcA family.

In terms of biological role, negative regulator of class I heat shock genes (grpE-dnaK-dnaJ and groELS operons). Prevents heat-shock induction of these operons. The protein is Heat-inducible transcription repressor HrcA of Burkholderia vietnamiensis (strain G4 / LMG 22486) (Burkholderia cepacia (strain R1808)).